The sequence spans 425 residues: G protein-activated inward rectifier potassium channel 2 (425 aa).

Over 1 to 91 (MTMAKLTESM…IFTTLVDLKW (91 aa)) the chain is Cytoplasmic. Ser18 and Ser25 each carry phosphoserine. A helical transmembrane segment spans residues 92-116 (RFNLLIFVMVYTVTWLFFGMIWWLI). The Extracellular portion of the chain corresponds to 117-140 (AYIRGDMDHIEDPSWTPCVTNLNG). Residues 141 to 152 (FVSAFLFSIETE) constitute an intramembrane region (helical; Pore-forming). The pore-forming intramembrane region spans 153–159 (TTIGYGY). The short motif at 154-159 (TIGYGY) is the Selectivity filter element. Residues 160 to 168 (RVITDKCPE) are Extracellular-facing. The chain crosses the membrane as a helical span at residues 169 to 190 (GIILLLIQSVLGSIVNAFMVGC). Residues 191–425 (MFVKISQPKK…VANLENESKV (235 aa)) lie on the Cytoplasmic side of the membrane. Residues 392–425 (NQHAELETEEEEKNPEELTERNGDVANLENESKV) form a disordered region. The short motif at 422–425 (ESKV) is the PDZ-binding element.

Belongs to the inward rectifier-type potassium channel (TC 1.A.2.1) family. KCNJ6 subfamily. As to quaternary structure, associates with KCNJ3/GIRK1to form a G-protein-activated heteromultimer pore-forming unit. Associates with KCNJ5/GRIK4 to form a G-protein-activated heteromultimer pore-forming unit. The resulting inward current is much larger. Interacts (via PDZ-binding motif) with SNX27 (via PDZ domain); the interaction is required when endocytosed to prevent degradation in lysosomes and promote recycling to the plasma membrane. In terms of assembly, associates with KCNJ3/GRIK1 to form a G-protein-activated heteromultimer pore-forming unit. Associates with KCNJ3/GRIK1 to form a G-protein-activated heteromultimer pore-forming unit. The resulting inward current is much larger. As to expression, expressed in the brain.

Its subcellular location is the membrane. The catalysed reaction is K(+)(in) = K(+)(out). Activated by phosphatidylinositol 4,5 biphosphate (PtdIns(4,5)P2). Inward rectifier potassium channels are characterized by a greater tendency to allow potassium to flow into the cell rather than out of it. Their voltage dependence is regulated by the concentration of extracellular potassium; as external potassium is raised, the voltage range of the channel opening shifts to more positive voltages. The inward rectification is mainly due to the blockage of outward current by internal magnesium. This potassium channel is controlled by G proteins. Forms a functional channel in association with KCNJ3/GIRK1. In terms of biological role, inward rectifier potassium channels are characterized by a greater tendency to allow potassium to flow into the cell rather than out of it. Their voltage dependence is regulated by the concentration of extracellular potassium; as external potassium is raised, the voltage range of the channel opening shifts to more positive voltages. The inward rectification is mainly due to the blockage of outward current by internal magnesium. This potassium channel is controlled by G proteins. The polypeptide is G protein-activated inward rectifier potassium channel 2 (Kcnj6) (Mus musculus (Mouse)).